The primary structure comprises 246 residues: UPF0758 protein SSU98_1084 (246 aa).

Residues 103–225 (RILGSEKLGR…YYSFREESDV (123 aa)) enclose the MPN domain. Residues histidine 174, histidine 176, and aspartate 187 each coordinate Zn(2+). The short motif at 174 to 187 (HNHPSGSVQPSRND) is the JAMM motif element.

It belongs to the UPF0758 family.

The sequence is that of UPF0758 protein SSU98_1084 from Streptococcus suis (strain 98HAH33).